Reading from the N-terminus, the 259-residue chain is Secretion system apparatus protein SsaT (259 aa).

Transmembrane regions (helical) follow at residues 9-29 (LIAL…LPLL), 35-55 (GAAL…LPII), 78-98 (VIIG…VDMA), 127-147 (LLFS…EFIL), 185-205 (ISFS…LGLL), and 214-234 (VFFF…LISF).

It belongs to the FliR/MopE/SpaR family.

It localises to the cell membrane. Functionally, part of a type III secretion system. This Salmonella typhimurium (strain LT2 / SGSC1412 / ATCC 700720) protein is Secretion system apparatus protein SsaT (ssaT).